A 231-amino-acid chain; its full sequence is UPF0653 protein C607.02c (231 aa).

4 disordered regions span residues M1 to N33, Y47 to Y68, S93 to E132, and I147 to E178. Residues S9–D27 are compositionally biased toward basic and acidic residues. 2 stretches are compositionally biased toward basic residues: residues K53 to D67 and E109 to K119.

The protein belongs to the UPF0653 family.

It is found in the nucleus. Its subcellular location is the nucleolus. The polypeptide is UPF0653 protein C607.02c (Schizosaccharomyces pombe (strain 972 / ATCC 24843) (Fission yeast)).